Consider the following 184-residue polypeptide: ADP-ribosylation factor-like protein 2 (184 aa).

Residue glycine 2 is the site of N-myristoyl glycine attachment. 23 to 30 (GLDNAGKT) serves as a coordination point for GTP. Serine 45 bears the Phosphoserine mark. Residues 66 to 70 (DVGGQ) and glycine 68 contribute to the GTP site. A Glycyl lysine isopeptide (Lys-Gly) (interchain with G-Cter in ubiquitin) cross-link involves residue lysine 71. 125-128 (NKQD) provides a ligand contact to GTP.

It belongs to the small GTPase superfamily. Arf family. Interacts with ELMOD2. Interacts with ARL2BP; the GTP-bound form interacts with ARL2BP. The GDP-bound form interacts preferentially with TBCD. Interacts with UNC119. Found in a complex with ARL2, ARL2BP and SLC25A4. The GTP-bound form interacts with PDE6D. Found in a complex with ARL2, ARL2BP and SLC25A6. Found in a complex with at least ARL2, PPP2CB, PPP2R1A, PPP2R2A, PPP2R5E and TBCD. In terms of processing, not N-myristoylated. As to expression, expressed in liver and retina (at protein level).

It is found in the nucleus. Its subcellular location is the mitochondrion intermembrane space. The protein resides in the cytoplasm. It localises to the cytoskeleton. The protein localises to the microtubule organizing center. It is found in the centrosome. Its subcellular location is the mitochondrion. Small GTP-binding protein which cycles between an inactive GDP-bound and an active GTP-bound form, and the rate of cycling is regulated by guanine nucleotide exchange factors (GEF) and GTPase-activating proteins (GAP). GTP-binding protein that does not act as an allosteric activator of the cholera toxin catalytic subunit. Regulates formation of new microtubules and centrosome integrity. Prevents the TBCD-induced microtubule destruction. Participates in association with TBCD, in the disassembly of the apical junction complexes. Antagonizes the effect of TBCD on epithelial cell detachment and tight and adherens junctions disassembly. Together with ARL2, plays a role in the nuclear translocation, retention and transcriptional activity of STAT3. Component of a regulated secretory pathway involved in Ca(2+)-dependent release of acetylcholine. Required for normal progress through the cell cycle. This Bos taurus (Bovine) protein is ADP-ribosylation factor-like protein 2 (ARL2).